The primary structure comprises 395 residues: Flagellin A (395 aa).

It belongs to the bacterial flagellin family.

It localises to the secreted. The protein resides in the bacterial flagellum. Flagellin is the subunit protein which polymerizes to form the filaments of bacterial flagella. Homomer of FlaA is able to form a functional filament. The polypeptide is Flagellin A (flaA) (Rhizobium meliloti (Ensifer meliloti)).